Reading from the N-terminus, the 617-residue chain is V-type proton ATPase catalytic subunit A (617 aa).

A Phosphothreonine modification is found at threonine 136. Residue 250–257 participates in ATP binding; it reads GAFGCGKT. Serine 384 carries the phosphoserine; by AMPK modification.

It belongs to the ATPase alpha/beta chains family. In terms of assembly, V-ATPase is a heteromultimeric enzyme made up of two complexes: the ATP-hydrolytic V1 complex and the proton translocation V0 complex. The V1 complex consists of three catalytic AB heterodimers that form a heterohexamer, three peripheral stalks each consisting of EG heterodimers, one central rotor including subunits D and F, and the regulatory subunits C and H. The proton translocation complex V0 consists of the proton transport subunit a, a ring of proteolipid subunits c9c'', rotary subunit d, subunits e and f, and the accessory subunits ATP6AP1/Ac45 and ATP6AP2/PRR. Interacts with the V0 complex V-ATPase subunit a4 ATP6V0A4. Interacts with WFS1. Interacts with alpha-crystallin B chain/CRYAB and with MTOR, forming a ternary complex. Phosphorylation at Ser-384 by AMPK down-regulates its enzyme activity. As to expression, expressed in brain (at protein level).

The protein localises to the cytoplasm. It is found in the cytosol. Its subcellular location is the cytoplasmic vesicle. The protein resides in the secretory vesicle. It localises to the clathrin-coated vesicle membrane. The protein localises to the lysosome. The catalysed reaction is ATP + H2O + 4 H(+)(in) = ADP + phosphate + 5 H(+)(out). ATP hydrolysis occurs at the interface between the nucleotide-binding domains of subunits A and B. ATP hydrolysis triggers a conformational change in the subunits D and F, which induces a shift of subunit d. The c-ring is subsequently rotated and results in a continuous proton translocation across the membrane. The V-ATPase is inhibited by bafilomycin A. Functionally, catalytic subunit of the V1 complex of vacuolar(H+)-ATPase (V-ATPase), a multisubunit enzyme composed of a peripheral complex (V1) that hydrolyzes ATP and a membrane integral complex (V0) that translocates protons. V-ATPase is responsible for acidifying and maintaining the pH of intracellular compartments and in some cell types, is targeted to the plasma membrane, where it is responsible for acidifying the extracellular environment. In aerobic conditions, involved in intracellular iron homeostasis, thus triggering the activity of Fe(2+) prolyl hydroxylase (PHD) enzymes, and leading to HIF1A hydroxylation and subsequent proteasomal degradation. May play a role in neurite development and synaptic connectivity. This Bos taurus (Bovine) protein is V-type proton ATPase catalytic subunit A (ATP6V1A).